A 450-amino-acid chain; its full sequence is tRNA-2-methylthio-N(6)-dimethylallyladenosine synthase (450 aa).

One can recognise an MTTase N-terminal domain in the interval lysine 17–alanine 131. Residues cysteine 26, cysteine 62, cysteine 94, cysteine 168, cysteine 172, and cysteine 175 each coordinate [4Fe-4S] cluster. The Radical SAM core domain occupies arginine 154–lysine 385. Positions glutamine 388–glutamine 450 constitute a TRAM domain.

The protein belongs to the methylthiotransferase family. MiaB subfamily. As to quaternary structure, monomer. Requires [4Fe-4S] cluster as cofactor.

It is found in the cytoplasm. The enzyme catalyses N(6)-dimethylallyladenosine(37) in tRNA + (sulfur carrier)-SH + AH2 + 2 S-adenosyl-L-methionine = 2-methylsulfanyl-N(6)-dimethylallyladenosine(37) in tRNA + (sulfur carrier)-H + 5'-deoxyadenosine + L-methionine + A + S-adenosyl-L-homocysteine + 2 H(+). In terms of biological role, catalyzes the methylthiolation of N6-(dimethylallyl)adenosine (i(6)A), leading to the formation of 2-methylthio-N6-(dimethylallyl)adenosine (ms(2)i(6)A) at position 37 in tRNAs that read codons beginning with uridine. The sequence is that of tRNA-2-methylthio-N(6)-dimethylallyladenosine synthase from Protochlamydia amoebophila (strain UWE25).